The chain runs to 240 residues: Large ribosomal subunit protein uL3 (240 aa).

2 disordered regions span residues serine 138–lysine 158 and glutamate 215–glycine 240. Glutamine 151 is subject to N5-methylglutamine.

It belongs to the universal ribosomal protein uL3 family. In terms of assembly, part of the 50S ribosomal subunit. Forms a cluster with proteins L14 and L19. Methylated by PrmB.

Functionally, one of the primary rRNA binding proteins, it binds directly near the 3'-end of the 23S rRNA, where it nucleates assembly of the 50S subunit. The polypeptide is Large ribosomal subunit protein uL3 (Beijerinckia indica subsp. indica (strain ATCC 9039 / DSM 1715 / NCIMB 8712)).